The primary structure comprises 94 residues: Protein RnfH (94 aa).

The protein belongs to the UPF0125 (RnfH) family.

This chain is Protein RnfH, found in Serratia proteamaculans (strain 568).